The sequence spans 422 residues: F-box protein At3g12350 (422 aa).

Residues 5 to 52 enclose the F-box domain; it reads ALPFCEIPEDLQLRILSLLTPAEISSFACTSKRFASLCQEDGKIWHVM. 2 stretches are compositionally biased toward basic and acidic residues: residues 197-207 and 242-252; these read NNRREDQRSSG and KEKERQASRTK. Disordered regions lie at residues 197 to 216 and 226 to 252; these read NNRR…LISS and LANK…SRTK.

This Arabidopsis thaliana (Mouse-ear cress) protein is F-box protein At3g12350.